The following is a 139-amino-acid chain: ATP synthase epsilon chain (139 aa).

This sequence belongs to the ATPase epsilon chain family. As to quaternary structure, F-type ATPases have 2 components, CF(1) - the catalytic core - and CF(0) - the membrane proton channel. CF(1) has five subunits: alpha(3), beta(3), gamma(1), delta(1), epsilon(1). CF(0) has three main subunits: a, b and c.

Its subcellular location is the cell inner membrane. Its function is as follows. Produces ATP from ADP in the presence of a proton gradient across the membrane. The polypeptide is ATP synthase epsilon chain (atpC) (Escherichia coli O157:H7).